The primary structure comprises 406 residues: 4-hydroxy-3-methylbut-2-en-1-yl diphosphate synthase (flavodoxin) (406 aa).

[4Fe-4S] cluster-binding residues include C297, C300, C343, and E350.

This sequence belongs to the IspG family. As to quaternary structure, homodimer. The cofactor is [4Fe-4S] cluster.

The enzyme catalyses (2E)-4-hydroxy-3-methylbut-2-enyl diphosphate + oxidized [flavodoxin] + H2O + 2 H(+) = 2-C-methyl-D-erythritol 2,4-cyclic diphosphate + reduced [flavodoxin]. The protein operates within isoprenoid biosynthesis; isopentenyl diphosphate biosynthesis via DXP pathway; isopentenyl diphosphate from 1-deoxy-D-xylulose 5-phosphate: step 5/6. Converts 2C-methyl-D-erythritol 2,4-cyclodiphosphate (ME-2,4cPP) into 1-hydroxy-2-methyl-2-(E)-butenyl 4-diphosphate. The protein is 4-hydroxy-3-methylbut-2-en-1-yl diphosphate synthase (flavodoxin) of Thermus thermophilus (strain ATCC BAA-163 / DSM 7039 / HB27).